The chain runs to 426 residues: Glutamate-1-semialdehyde 2,1-aminomutase (426 aa).

At Lys264 the chain carries N6-(pyridoxal phosphate)lysine.

Belongs to the class-III pyridoxal-phosphate-dependent aminotransferase family. HemL subfamily. Requires pyridoxal 5'-phosphate as cofactor.

The protein localises to the cytoplasm. The enzyme catalyses (S)-4-amino-5-oxopentanoate = 5-aminolevulinate. It participates in porphyrin-containing compound metabolism; protoporphyrin-IX biosynthesis; 5-aminolevulinate from L-glutamyl-tRNA(Glu): step 2/2. The sequence is that of Glutamate-1-semialdehyde 2,1-aminomutase from Methanocella arvoryzae (strain DSM 22066 / NBRC 105507 / MRE50).